The sequence spans 417 residues: Mast cell carboxypeptidase A (417 aa).

A signal peptide spans 1-15 (MRLILPVGLIATTLA). The propeptide at 16-109 (IAPVRFDREK…IEKQFDVKED (94 aa)) is activation peptide. The 295-residue stretch at 118-412 (KYNNWEKIVA…LAVKFIAKYI (295 aa)) folds into the Peptidase M14 domain. 2 disulfides stabilise this stretch: Cys173–Cys186 and Cys245–Cys268. Residues His176 and Glu179 each coordinate Zn(2+). A Zn(2+)-binding site is contributed by His304. Residue Glu378 is the Proton donor/acceptor of the active site.

This sequence belongs to the peptidase M14 family. Zn(2+) serves as cofactor.

The protein resides in the cytoplasmic vesicle. It localises to the secretory vesicle. It catalyses the reaction Release of a C-terminal amino acid, but little or no action with -Asp, -Glu, -Arg, -Lys or -Pro.. The polypeptide is Mast cell carboxypeptidase A (CPA3) (Homo sapiens (Human)).